Consider the following 957-residue polypeptide: Outer kinetochore KNL1 complex subunit knl-1 (957 aa).

Copy 1 of the repeat occupies 87–90; the sequence is MDIT. Positions 87–393 are 8 X 4 AA repeats of M-[D/E]-[I/L/M]-[S/T]; sequence MDITGLNSTP…NFDDVAMDIT (307 aa). The interval 89–111 is disordered; the sequence is ITGLNSTPVTPKTQTPFNGSMDM. Over residues 91–106 the composition is skewed to polar residues; sequence GLNSTPVTPKTQTPFN. Repeat copies occupy residues 109–112, 206–209, 251–254, 282–285, 326–329, 367–370, and 390–393. The disordered stretch occupies residues 476 to 504; it reads SLQQSSMRMSTTITEDVTASKNPESSTIS. A coiled-coil region spans residues 830-950; that stretch reads KFAKESNVEI…RKKKEEMVER (121 aa).

In terms of assembly, component of the KNL1 complex composed of knl-1 and kbp-5. Part of the ten-subunit outer kinetochore KMN network that includes the KNL1, MIS12 and NDC80 complexes. Interacts with the protein phosphatase 1 (PP1) catalytic subunit gsp-1; the interaction is direct. Interacts with the protein phosphatase 1 (PP1) catalytic subunit gsp-2; the interaction is direct. Interacts with the MIS12 complex subunits kbp-1, kbp-2 and mis-12. Interacts with the NDC80 complex components ndc-80 and him-10. Interacts with knl-3. Interacts with kbp-3. Interacts with kbp-4. Interacts with kbp-5.

The protein localises to the cytoplasm. Its subcellular location is the cell cortex. The protein resides in the chromosome. It is found in the centromere. It localises to the kinetochore. Functionally, acts as a component of the outer kinetochore KNL1 complex that serves as a docking point for spindle assembly checkpoint components and mediates microtubule-kinetochore interactions. Kinetochores, consisting of a centromere-associated inner segment and a microtubule-contacting outer segment, play a crucial role in chromosome segregation by mediating the physical connection between centromeric DNA and spindle microtubules. The outer kinetochore is made up of the ten-subunit KMN network, comprising the MIS12, NDC80 and KNL1 complexes, and auxiliary microtubule-associated components; together they connect the outer kinetochore with the inner kinetochore, bind microtubules, and mediate interactions with mitotic checkpoint proteins that delay anaphase until chromosomes are bioriented on the spindle. Binds the protein phosphatase 1 catalytic subunits gsp-1 and gsp-2, which has a role in delaying formation of load-bearing kinetochore-microtubule attachments. Required for the recruitment of spindle-assembly checkpoint components bub-1 and mdf-1/2 to unattached kinetochores. Binds microtubules which plays a role in silencing of the spindle assembly checkpoint, but not the formation of load-bearing microtubule-kinetochore attachments. Has a role in the correct localization of the spindly-like protein spdl-1 and the RZZ complex that is composed of rod-1, czw-1 and zwl-1 to kinetochores. This Caenorhabditis briggsae protein is Outer kinetochore KNL1 complex subunit knl-1.